Consider the following 281-residue polypeptide: Formamidopyrimidine-DNA glycosylase (281 aa).

P2 (schiff-base intermediate with DNA) is an active-site residue. Residue E3 is the Proton donor of the active site. K58 serves as the catalytic Proton donor; for beta-elimination activity. Positions 94, 113, and 156 each coordinate DNA. The FPG-type; degenerate zinc finger occupies A241 to R281. R271 (proton donor; for delta-elimination activity) is an active-site residue.

Belongs to the FPG family. Monomer. It depends on Zn(2+) as a cofactor.

The enzyme catalyses Hydrolysis of DNA containing ring-opened 7-methylguanine residues, releasing 2,6-diamino-4-hydroxy-5-(N-methyl)formamidopyrimidine.. It carries out the reaction 2'-deoxyribonucleotide-(2'-deoxyribose 5'-phosphate)-2'-deoxyribonucleotide-DNA = a 3'-end 2'-deoxyribonucleotide-(2,3-dehydro-2,3-deoxyribose 5'-phosphate)-DNA + a 5'-end 5'-phospho-2'-deoxyribonucleoside-DNA + H(+). Its function is as follows. Involved in base excision repair of DNA damaged by oxidation or by mutagenic agents. Acts as a DNA glycosylase that recognizes and removes damaged bases. Has a preference for oxidized purines, such as 7,8-dihydro-8-oxoguanine (8-oxoG). Has AP (apurinic/apyrimidinic) lyase activity and introduces nicks in the DNA strand. Cleaves the DNA backbone by beta-delta elimination to generate a single-strand break at the site of the removed base with both 3'- and 5'-phosphates. The sequence is that of Formamidopyrimidine-DNA glycosylase from Rhodospirillum rubrum (strain ATCC 11170 / ATH 1.1.1 / DSM 467 / LMG 4362 / NCIMB 8255 / S1).